A 242-amino-acid polypeptide reads, in one-letter code: UPF0173 metal-dependent hydrolase APE_1117 (242 aa).

Belongs to the UPF0173 family.

The chain is UPF0173 metal-dependent hydrolase APE_1117 from Aeropyrum pernix (strain ATCC 700893 / DSM 11879 / JCM 9820 / NBRC 100138 / K1).